A 689-amino-acid chain; its full sequence is Glycine--tRNA ligase beta subunit (689 aa).

Belongs to the class-II aminoacyl-tRNA synthetase family. As to quaternary structure, tetramer of two alpha and two beta subunits.

It is found in the cytoplasm. It carries out the reaction tRNA(Gly) + glycine + ATP = glycyl-tRNA(Gly) + AMP + diphosphate. The protein is Glycine--tRNA ligase beta subunit of Escherichia coli O139:H28 (strain E24377A / ETEC).